A 158-amino-acid polypeptide reads, in one-letter code: Snaclec crotocetin-1 (158 aa).

The first 23 residues, 1–23 (MGRFIFVSFGLLVVFLSLSGTGA), serve as a signal peptide directing secretion. Cystine bridges form between Cys27/Cys38, Cys55/Cys152, and Cys127/Cys144. The 120-residue stretch at 34-153 (YDQYCYRVIK…CEEKNLFVCK (120 aa)) folds into the C-type lectin domain.

It belongs to the snaclec family. As to quaternary structure, heterodimer; disulfide-linked. In terms of tissue distribution, expressed by the venom gland.

It is found in the secreted. In terms of biological role, interferes with one step of hemostasis (modulation of platelet aggregation, or coagulation cascade, for example). This chain is Snaclec crotocetin-1, found in Crotalus durissus terrificus (South American rattlesnake).